The sequence spans 203 residues: Outer-membrane lipoprotein LolB (203 aa).

Residues 1-16 (MKTFLPCLFFLLILVG) form the signal peptide. Residue C17 is the site of N-palmitoyl cysteine attachment. C17 is lipidated: S-diacylglycerol cysteine.

This sequence belongs to the LolB family. In terms of assembly, monomer.

It localises to the cell outer membrane. Its function is as follows. Plays a critical role in the incorporation of lipoproteins in the outer membrane after they are released by the LolA protein. This chain is Outer-membrane lipoprotein LolB, found in Psychromonas ingrahamii (strain DSM 17664 / CCUG 51855 / 37).